A 517-amino-acid chain; its full sequence is ATP synthase subunit alpha 1 (517 aa).

174-181 (GDRQTGKT) is a binding site for ATP.

It belongs to the ATPase alpha/beta chains family. In terms of assembly, F-type ATPases have 2 components, CF(1) - the catalytic core - and CF(0) - the membrane proton channel. CF(1) has five subunits: alpha(3), beta(3), gamma(1), delta(1), epsilon(1). CF(0) has three main subunits: a(1), b(2) and c(9-12). The alpha and beta chains form an alternating ring which encloses part of the gamma chain. CF(1) is attached to CF(0) by a central stalk formed by the gamma and epsilon chains, while a peripheral stalk is formed by the delta and b chains.

The protein resides in the cell inner membrane. It catalyses the reaction ATP + H2O + 4 H(+)(in) = ADP + phosphate + 5 H(+)(out). Produces ATP from ADP in the presence of a proton gradient across the membrane. The alpha chain is a regulatory subunit. The sequence is that of ATP synthase subunit alpha 1 from Albidiferax ferrireducens (strain ATCC BAA-621 / DSM 15236 / T118) (Rhodoferax ferrireducens).